The sequence spans 1046 residues: MTNFRLNLLAYSVMLGLTAGVAYAAQPTNQPTNQPTNQPTNQDGNVSEQLEQINVLGSDNHNDNTPPKIAETIKTAKKPEKEQAQDVKDLVRYETGITVVEAGRFGNSGFAVRGVDENRVAVQIDGLHQAETISSQGFKELFEGYGNFNNTRNTAEIETLKQVTIRKGADSLKSGSGALGGSVSFDTKDARDYLLNKNYYASYKRGYNTADNQNLQTLTLAGRYKYFDAIAVITSRKGHELENYGYKNYNDRIQGREREKADPYRRTQESKLLKFAFQPTENHRLSVVVDLYKQTSKGHDFSYTLKQNTEHMTYDEVELRHTNDKVDRKNLAFTYENFTETPFWDTLKISYSHQKITTTARTDDYCDGNDKCALAGNPLGMKYNQDNQLVGEDGNLAKYKDINTKQTIHEKLPFTKPNEKWRYNRVDWDALKKKYPGVPIYASCIEENNDPSKYCSYDVEIPKKENTFEINGKQYDLLSEADKNVISDEQRLPTNSSYLFSCDGLNCDKDTIQGFEKKGTTVNIPFVVIEKNGKKYAKTEAVANNQLSGPYIFMPSKTGYQTNLWTQRDLTSETKQINLDLTKHLELGKTQHDLSYGGLWSEMEKSMTNISGDSPMNVKWWAQYPHSCDIFLPSSTPNGAPTLNPERTNTLCNNSNVYSFLIPVKTKTGALYFINDFRVNSHIAFNFGYRYDRVKYDPEYIPGKTPKIPDDMVVNLYVKQPTFDDTKVNLPPEELRKKEANAAANIKAIVQPKKFSASSYSVGTTLDPLNWLRLQAKYGKAFRAPTSDEIYFTFLHPDFSIRPNRDLQAETAKTKELALTLHNEIGYVTTSVFDTRYRNFIDLAYKGLYNVQRHSKLTPYHTYQNVNRPNAKVTGWEIAAQISLGKITQFLNGLNLSYKYTYQKGRIDGNIPMNAIQPKTSVYGVSYAHPADKFGLDLYFTHVSAKNAEDTYNMFYKEEGKKDSTIKWRSKSYTTIDLLGYIKPIKNLTLRAGVYNLTNRKYITWDSARSIRPFGTSNMINQKTGEGINRFYAPGRNYRMSVQFEF.

A signal peptide spans 1-24; the sequence is MTNFRLNLLAYSVMLGLTAGVAYA. Repeat copies occupy residues 26 to 29, 30 to 33, 34 to 37, and 38 to 41. The tract at residues 26-41 is 4 X 4 AA tandem repeats of Q-P-T-N; the sequence is QPTNQPTNQPTNQPTN. Residues 51-58 carry the TonB box motif; sequence EQINVLGS. The 128-residue stretch at 61-188 folds into the TBDR plug domain; the sequence is HNDNTPPKIA…LGGSVSFDTK (128 aa). In terms of domain architecture, TBDR beta-barrel spans 196-1046; the sequence is NKNYYASYKR…NYRMSVQFEF (851 aa). Positions 1029-1046 match the TonB C-terminal box motif; that stretch reads NRFYAPGRNYRMSVQFEF.

Belongs to the TonB-dependent receptor family. Hemoglobin/haptoglobin binding protein subfamily.

The protein resides in the cell outer membrane. Acts as a receptor for the hemoglobin/haptoglobin complex of the human host and is required for heme uptake. Does not bind hemoglobin alone. The polypeptide is Hemoglobin-haptoglobin-binding protein A (hhuA) (Haemophilus influenzae).